The sequence spans 277 residues: Bifunctional protein FolD (277 aa).

NADP(+) contacts are provided by residues 160–162 (GAS), Ser-185, and Ile-226.

The protein belongs to the tetrahydrofolate dehydrogenase/cyclohydrolase family. In terms of assembly, homodimer.

The catalysed reaction is (6R)-5,10-methylene-5,6,7,8-tetrahydrofolate + NADP(+) = (6R)-5,10-methenyltetrahydrofolate + NADPH. The enzyme catalyses (6R)-5,10-methenyltetrahydrofolate + H2O = (6R)-10-formyltetrahydrofolate + H(+). The protein operates within one-carbon metabolism; tetrahydrofolate interconversion. In terms of biological role, catalyzes the oxidation of 5,10-methylenetetrahydrofolate to 5,10-methenyltetrahydrofolate and then the hydrolysis of 5,10-methenyltetrahydrofolate to 10-formyltetrahydrofolate. This Vesicomyosocius okutanii subsp. Calyptogena okutanii (strain HA) protein is Bifunctional protein FolD.